The primary structure comprises 260 residues: Achaete-scute homolog 2 (260 aa).

Disordered regions lie at residues 85–126 and 191–239; these read AGAC…RNER and PATR…EDSS. Low complexity-rich tracts occupy residues 110–121 and 200–218; these read ATEASSSSAAVA and TQPS…STSP. The bHLH domain maps to 118 to 170; sequence AAVARRNERERNRVKLVNLGFQALRQHVPHGGANKKLSKVETLRSAVEYIRAL.

In terms of assembly, efficient DNA binding requires dimerization with another bHLH protein. Forms heterodimers with bHLH transcription factor TCF3. May not heterodimerise with bHLH protein HAND1. Expressed in Schwann cells in the peripheral nerve (at protein level). Also expressed by endothelial cells (at protein level). May be expressed in neuronal precursor cells.

It localises to the nucleus. It is found in the cytoplasm. Functionally, transcription factor. Binds to E-box motifs 5'-CANNTG-3' in the regulatory elements of target genes, probably as a heterodimer with another basic helix-loop-helix (bHLH) protein such as the transcription factor TCF3. May bind both open and closed chromatin, acting as a pioneer transcription factor to allow other factors to bind and activate lineage-specific genes. Required during post-implantation development for the generation of some differentiated trophoblast cell types. Transcriptional activity of ASCL2 may be antagonised in a subset of trophoblast cells by bHLH transcription factor HAND1, perhaps by competing for dimerization with other bHLH proteins. Involved in differentiation and function of follicular T-helper (Tfh) cells, thereby playing a role in germinal center responses; probably modulates expression of genes involved in Tfh cell function, such as BCL6. May also act as a suppressor of Th1-, Th2- and Th17-cell differentiation. Induces the formation of stem cells in intestinal crypts in vitro, synergistically activating transcription of target genes, such as SOX9, together with TCF4/beta-catenin. May form a bistable transcriptional switch, controlling expression of its own gene together with Wnt/R-spondin signaling, and thereby maintaining stem cell characteristics. Modulates expression of target genes, including perhaps down-regulating EGR1/Krox24 and chemokine CXCL10/Mob-1 and up-regulating CXCR4 and CDKN1C/p57kip2, in Schwann cells. May play a role in reducing proliferation of Schwann cells, perhaps acting via modulation of expression of CDKN1C. May be dispensable for blastocyst formation and later embryonic function. May be involved in the determination of neuronal precursors. This Rattus norvegicus (Rat) protein is Achaete-scute homolog 2 (Ascl2).